The following is a 313-amino-acid chain: Fucose-specific lectin (313 aa).

A run of 6 repeats spans residues 5–57 (FLYT…VIGE), 58–109 (AKLF…VGVK), 110–162 (VGSN…SFGS), 163–208 (TVPG…FSAS), 209–260 (ASAG…RPTP), and 261–304 (SLPD…IGAV). Residues 5–304 (FLYTSKIAAI…SGKGWSIGAV (300 aa)) are 6 X approximate tandem repeats. The beta-L-fucose site is built by Arg25, Glu37, Arg78, Glu90, Trp98, Gln102, Arg132, Glu147, and Trp154. Alpha-L-fucose is bound by residues Arg78 and Glu90. Gln102 is an alpha-L-fucose binding site. Positions 154, 180, and 192 each coordinate alpha-L-fucose. Beta-L-fucose is bound at residue Trp200. Gly204 serves as a coordination point for alpha-L-fucose. Beta-L-fucose is bound by residues Arg227 and Glu239. Trp246 provides a ligand contact to alpha-L-fucose. Residue Trp299 coordinates beta-L-fucose.

This sequence belongs to the fungal fucose-specific lectin family. As to quaternary structure, forms homodimers. The two AAL monomers are associated via interactions between N-terminal and C-terminal peptides. Tyr-7 interacts via aromatic ring stacking with its counterpart on the other monomer, whereas Ser-284 interacts via hydrogen bonding with Asp-264 on the other monomer.

Its function is as follows. Lectin that specifically binds to L-fucose. Has strongest preference for the alpha-1,6-fucosylated chain (core fucose) on glycoproteins among alpha-1,2-, alpha-1,3-, alpha-1,4-, and alpha-1,6-fucosylated chains. Might play a role in the differentiation of the fruiting body. Exhibits antifungal activity against Mucor racemosus and thus could act as an antifungal protein in natural ecosystems. The sequence is that of Fucose-specific lectin from Aleuria aurantia (Orange peel mushroom).